We begin with the raw amino-acid sequence, 116 residues long: Non-specific lipid-transfer protein 8 (116 aa).

Residues Met-1–Ser-24 form the signal peptide. Intrachain disulfides connect Cys-28–Cys-76, Cys-38–Cys-53, Cys-54–Cys-98, and Cys-74–Cys-112.

It belongs to the plant LTP family.

In terms of biological role, plant non-specific lipid-transfer proteins transfer phospholipids as well as galactolipids across membranes. May play a role in wax or cutin deposition in the cell walls of expanding epidermal cells and certain secretory tissues. This Arabidopsis thaliana (Mouse-ear cress) protein is Non-specific lipid-transfer protein 8 (LTP8).